The sequence spans 205 residues: Dephospho-CoA kinase (205 aa).

A DPCK domain is found at 7-204; sequence LVGLTGGIGS…ARYLAAARAT (198 aa). 15–20 is an ATP binding site; sequence GSGKSA.

The protein belongs to the CoaE family.

The protein resides in the cytoplasm. The catalysed reaction is 3'-dephospho-CoA + ATP = ADP + CoA + H(+). The protein operates within cofactor biosynthesis; coenzyme A biosynthesis; CoA from (R)-pantothenate: step 5/5. In terms of biological role, catalyzes the phosphorylation of the 3'-hydroxyl group of dephosphocoenzyme A to form coenzyme A. This Aromatoleum aromaticum (strain DSM 19018 / LMG 30748 / EbN1) (Azoarcus sp. (strain EbN1)) protein is Dephospho-CoA kinase.